The chain runs to 322 residues: uncharacterized protein (322 aa).

5 helical membrane-spanning segments follow: residues 159-179 (GIIF…MLYL), 203-223 (MNIP…YIWL), 234-254 (GGIL…RVGL), 267-287 (FEGS…LIPY), and 296-316 (TLLS…FFAW).

Its subcellular location is the membrane. This is an uncharacterized protein from Dictyostelium discoideum (Social amoeba).